A 316-amino-acid polypeptide reads, in one-letter code: 4-hydroxy-3-methylbut-2-enyl diphosphate reductase (316 aa).

Cys-12 lines the [4Fe-4S] cluster pocket. (2E)-4-hydroxy-3-methylbut-2-enyl diphosphate is bound by residues His-43 and His-81. Dimethylallyl diphosphate-binding residues include His-43 and His-81. Isopentenyl diphosphate contacts are provided by His-43 and His-81. Cys-103 is a [4Fe-4S] cluster binding site. His-131 is a (2E)-4-hydroxy-3-methylbut-2-enyl diphosphate binding site. A dimethylallyl diphosphate-binding site is contributed by His-131. Residue His-131 participates in isopentenyl diphosphate binding. Catalysis depends on Glu-133, which acts as the Proton donor. Thr-170 lines the (2E)-4-hydroxy-3-methylbut-2-enyl diphosphate pocket. Cys-198 serves as a coordination point for [4Fe-4S] cluster. 3 residues coordinate (2E)-4-hydroxy-3-methylbut-2-enyl diphosphate: Ser-226, Asn-228, and Ser-271. 3 residues coordinate dimethylallyl diphosphate: Ser-226, Asn-228, and Ser-271. Isopentenyl diphosphate is bound by residues Ser-226, Asn-228, and Ser-271.

The protein belongs to the IspH family. [4Fe-4S] cluster is required as a cofactor.

The catalysed reaction is isopentenyl diphosphate + 2 oxidized [2Fe-2S]-[ferredoxin] + H2O = (2E)-4-hydroxy-3-methylbut-2-enyl diphosphate + 2 reduced [2Fe-2S]-[ferredoxin] + 2 H(+). It catalyses the reaction dimethylallyl diphosphate + 2 oxidized [2Fe-2S]-[ferredoxin] + H2O = (2E)-4-hydroxy-3-methylbut-2-enyl diphosphate + 2 reduced [2Fe-2S]-[ferredoxin] + 2 H(+). It participates in isoprenoid biosynthesis; dimethylallyl diphosphate biosynthesis; dimethylallyl diphosphate from (2E)-4-hydroxy-3-methylbutenyl diphosphate: step 1/1. The protein operates within isoprenoid biosynthesis; isopentenyl diphosphate biosynthesis via DXP pathway; isopentenyl diphosphate from 1-deoxy-D-xylulose 5-phosphate: step 6/6. Catalyzes the conversion of 1-hydroxy-2-methyl-2-(E)-butenyl 4-diphosphate (HMBPP) into a mixture of isopentenyl diphosphate (IPP) and dimethylallyl diphosphate (DMAPP). Acts in the terminal step of the DOXP/MEP pathway for isoprenoid precursor biosynthesis. The sequence is that of 4-hydroxy-3-methylbut-2-enyl diphosphate reductase from Bacillus mycoides (strain KBAB4) (Bacillus weihenstephanensis).